Reading from the N-terminus, the 260-residue chain is Hydroxyacylglutathione hydrolase (260 aa).

Residues His-61, His-63, Asp-65, His-66, His-119, Asp-138, and His-176 each coordinate Zn(2+).

It belongs to the metallo-beta-lactamase superfamily. Glyoxalase II family. In terms of assembly, monomer. Zn(2+) serves as cofactor.

The catalysed reaction is an S-(2-hydroxyacyl)glutathione + H2O = a 2-hydroxy carboxylate + glutathione + H(+). It functions in the pathway secondary metabolite metabolism; methylglyoxal degradation; (R)-lactate from methylglyoxal: step 2/2. Its function is as follows. Thiolesterase that catalyzes the hydrolysis of S-D-lactoyl-glutathione to form glutathione and D-lactic acid. In Brucella anthropi (strain ATCC 49188 / DSM 6882 / CCUG 24695 / JCM 21032 / LMG 3331 / NBRC 15819 / NCTC 12168 / Alc 37) (Ochrobactrum anthropi), this protein is Hydroxyacylglutathione hydrolase.